The following is a 1268-amino-acid chain: Meiosis inhibitor protein 1 (1268 aa).

In terms of tissue distribution, strongly expressed in testis, weakly in brain, and not detected in spleen, liver, kidney, small intestine or colon.

Functionally, required for normal meiotic chromosome synapsis. May be involved in the formation of meiotic double-strand breaks (DSBs) in spermatocytes. The polypeptide is Meiosis inhibitor protein 1 (Mus musculus (Mouse)).